Consider the following 563-residue polypeptide: Tripeptidyl-peptidase 1 (563 aa).

The first 19 residues, 1–19 (MGPRSGLLGLFALFVAGKC), serve as a signal peptide directing secretion. The propeptide at 20 to 195 (SYSPEPDQQR…PEPQVPGTVG (176 aa)) is removed in mature form. A disulfide bridge connects residues Cys111 and Cys122. The Peptidase S53 domain occupies 199 to 563 (GVTPSVIRKR…PALLKTLMNP (365 aa)). N-linked (GlcNAc...) asparagine glycans are attached at residues Asn210 and Asn222. Residues Glu272 and Asp276 each act as charge relay system in the active site. N-linked (GlcNAc...) asparagine glycosylation is found at Asn286, Asn313, and Asn443. 2 disulfides stabilise this stretch: Cys365–Cys526 and Cys522–Cys537. Ser475 (charge relay system) is an active-site residue. Ca(2+) is bound by residues Asp517 and Val518. Ca(2+) is bound by residues Gly539, Gly541, and Asp543.

Monomer. Interacts with CLN5. Interacts with CLN3. Ca(2+) serves as cofactor. Activated by autocatalytic proteolytical processing upon acidification. N-glycosylation is required for processing and activity.

It is found in the lysosome. The protein localises to the melanosome. The catalysed reaction is Release of an N-terminal tripeptide from a polypeptide, but also has endopeptidase activity.. In terms of biological role, lysosomal serine protease with tripeptidyl-peptidase I activity. May act as a non-specific lysosomal peptidase which generates tripeptides from the breakdown products produced by lysosomal proteinases. Requires substrates with an unsubstituted N-terminus. The protein is Tripeptidyl-peptidase 1 (TPP1) of Bos taurus (Bovine).